We begin with the raw amino-acid sequence, 390 residues long: 23S rRNA (uracil(747)-C(5))-methyltransferase RlmC (390 aa).

Cys12, Cys20, Cys23, and Cys100 together coordinate [4Fe-4S] cluster. Residues Gln225, Phe254, Glu275, and Asn322 each contribute to the S-adenosyl-L-methionine site. Residue Cys349 is the Nucleophile of the active site.

This sequence belongs to the class I-like SAM-binding methyltransferase superfamily. RNA M5U methyltransferase family. RlmC subfamily.

It carries out the reaction uridine(747) in 23S rRNA + S-adenosyl-L-methionine = 5-methyluridine(747) in 23S rRNA + S-adenosyl-L-homocysteine + H(+). In terms of biological role, catalyzes the formation of 5-methyl-uridine at position 747 (m5U747) in 23S rRNA. The sequence is that of 23S rRNA (uracil(747)-C(5))-methyltransferase RlmC from Shewanella baltica (strain OS223).